The following is a 262-amino-acid chain: Glycoprotein gp2 (262 aa).

A disordered region spans residues 1–45; that stretch reads RRGSPQGGSHTTPHPDRLTPSPDDTYDDDTNHPNGRNNSIEIVPQ.

It localises to the virion membrane. In terms of biological role, virulence factor. The sequence is that of Glycoprotein gp2 from Equus caballus (Horse).